The following is a 292-amino-acid chain: 4-hydroxy-tetrahydrodipicolinate synthase (292 aa).

Residue T45 participates in pyruvate binding. Y133 (proton donor/acceptor) is an active-site residue. K161 (schiff-base intermediate with substrate) is an active-site residue. I203 contributes to the pyruvate binding site.

The protein belongs to the DapA family. Homotetramer; dimer of dimers.

It is found in the cytoplasm. It catalyses the reaction L-aspartate 4-semialdehyde + pyruvate = (2S,4S)-4-hydroxy-2,3,4,5-tetrahydrodipicolinate + H2O + H(+). It functions in the pathway amino-acid biosynthesis; L-lysine biosynthesis via DAP pathway; (S)-tetrahydrodipicolinate from L-aspartate: step 3/4. Functionally, catalyzes the condensation of (S)-aspartate-beta-semialdehyde [(S)-ASA] and pyruvate to 4-hydroxy-tetrahydrodipicolinate (HTPA). This Azoarcus sp. (strain BH72) protein is 4-hydroxy-tetrahydrodipicolinate synthase.